A 325-amino-acid chain; its full sequence is GTP 3',8-cyclase (325 aa).

The Radical SAM core domain occupies 1–226; it reads MNTVNYLRIS…EGACYGNGPA (226 aa). Arg8 lines the GTP pocket. Residues Cys15 and Cys19 each coordinate [4Fe-4S] cluster. An S-adenosyl-L-methionine-binding site is contributed by Tyr21. [4Fe-4S] cluster is bound at residue Cys22. Residue Arg60 coordinates GTP. Residue Gly64 participates in S-adenosyl-L-methionine binding. Ser91 is a binding site for GTP. Ser115 serves as a coordination point for S-adenosyl-L-methionine. Lys152 is a binding site for GTP. Met186 serves as a coordination point for S-adenosyl-L-methionine. Positions 249 and 252 each coordinate [4Fe-4S] cluster. Residue 254–256 participates in GTP binding; sequence RVR. Cys266 is a binding site for [4Fe-4S] cluster.

The protein belongs to the radical SAM superfamily. MoaA family. As to quaternary structure, monomer and homodimer. [4Fe-4S] cluster is required as a cofactor.

It carries out the reaction GTP + AH2 + S-adenosyl-L-methionine = (8S)-3',8-cyclo-7,8-dihydroguanosine 5'-triphosphate + 5'-deoxyadenosine + L-methionine + A + H(+). Its pathway is cofactor biosynthesis; molybdopterin biosynthesis. In terms of biological role, catalyzes the cyclization of GTP to (8S)-3',8-cyclo-7,8-dihydroguanosine 5'-triphosphate. In Gloeobacter violaceus (strain ATCC 29082 / PCC 7421), this protein is GTP 3',8-cyclase.